Here is a 260-residue protein sequence, read N- to C-terminus: Transmembrane protein 106C (260 aa).

The N-myristoyl glycine moiety is linked to residue Gly-2. A helical transmembrane segment spans residues 85 to 105 (YVLLSVLLCLLASGLVFFFLF). A glycan (N-linked (GlcNAc...) asparagine) is linked at Asn-171. Residues 196–216 (SYVYFYCTLPAILVHNIVIFM) traverse the membrane as a helical segment.

The protein belongs to the TMEM106 family. As to quaternary structure, interacts with TMEM106B.

The protein resides in the endoplasmic reticulum membrane. It is found in the membrane. In Rattus norvegicus (Rat), this protein is Transmembrane protein 106C (Tmem106c).